We begin with the raw amino-acid sequence, 93 residues long: Small ribosomal subunit protein uS19 (93 aa).

2 disordered regions span residues 1-25 (MPRSLKKGPFVDGHLQKKVDDQNTK) and 74-93 (FAPTRTYRGHDKDDRKARRR). Basic and acidic residues-rich tracts occupy residues 14-23 (HLQKKVDDQN) and 81-93 (RGHDKDDRKARRR).

Belongs to the universal ribosomal protein uS19 family.

Protein S19 forms a complex with S13 that binds strongly to the 16S ribosomal RNA. This chain is Small ribosomal subunit protein uS19, found in Beutenbergia cavernae (strain ATCC BAA-8 / DSM 12333 / CCUG 43141 / JCM 11478 / NBRC 16432 / NCIMB 13614 / HKI 0122).